Consider the following 722-residue polypeptide: Ras and EF-hand domain-containing protein (722 aa).

EF-hand domains lie at 5-39 (DELS…ELKV) and 39-74 (VSPS…ARGL). A compositionally biased stretch (basic and acidic residues) spans 75–84 (HMPEGKKDVE). The segment at 75-109 (HMPEGKKDVEQGEPPKSPSTPDKEEKPEETSSPAW) is disordered. Residues 156–335 (REIRLQSTEM…ANRKLHDSND (180 aa)) adopt a coiled-coil conformation. Over residues 355 to 374 (INTSPGSTISRNSPKLTRCT) the composition is skewed to polar residues. Disordered regions lie at residues 355–384 (INTS…PRSS) and 439–491 (FHRS…SGAS). The span at 480-491 (SNPVSRSSSGAS) shows a compositional bias: low complexity. Residues 532–537 (AVGKSS), 635–638 (NKAD), and 672–673 (AK) each bind GTP.

It belongs to the small GTPase superfamily. Rab family. In terms of assembly, homodimer.

It is found in the cytoplasm. The protein resides in the perinuclear region. Its function is as follows. Binds predominantly GDP, and also GTP. This is Ras and EF-hand domain-containing protein (rasef) from Xenopus tropicalis (Western clawed frog).